Here is a 457-residue protein sequence, read N- to C-terminus: tRNA (guanine(37)-N(1))-methyltransferase (457 aa).

S-adenosyl-L-methionine is bound by residues histidine 240, 278–279 (DL), 306–307 (DG), and asparagine 338.

Belongs to the class I-like SAM-binding methyltransferase superfamily. TRM5/TYW2 family. Monomer.

The protein resides in the mitochondrion matrix. Its subcellular location is the nucleus. It is found in the cytoplasm. The enzyme catalyses guanosine(37) in tRNA + S-adenosyl-L-methionine = N(1)-methylguanosine(37) in tRNA + S-adenosyl-L-homocysteine + H(+). Its function is as follows. Specifically methylates the N1 position of guanosine-37 in various cytoplasmic and mitochondrial tRNAs. Methylation is not dependent on the nature of the nucleoside 5' of the target nucleoside. This is the first step in the biosynthesis of wybutosine (yW), a modified base adjacent to the anticodon of tRNAs and required for accurate decoding. The sequence is that of tRNA (guanine(37)-N(1))-methyltransferase from Drosophila melanogaster (Fruit fly).